The chain runs to 52 residues: Repressor-like protein SSo7c3 (52 aa).

The 48-residue stretch at 4–51 (EEVVKVSRNYQVTIPAKVRQKFPVKEGDLVKVIYDENGGVVKIQILDS) folds into the SpoVT-AbrB domain.

This is Repressor-like protein SSo7c3 from Saccharolobus solfataricus (strain ATCC 35092 / DSM 1617 / JCM 11322 / P2) (Sulfolobus solfataricus).